A 189-amino-acid chain; its full sequence is Elongation factor P (189 aa).

This sequence belongs to the elongation factor P family.

The protein resides in the cytoplasm. It functions in the pathway protein biosynthesis; polypeptide chain elongation. Functionally, involved in peptide bond synthesis. Stimulates efficient translation and peptide-bond synthesis on native or reconstituted 70S ribosomes in vitro. Probably functions indirectly by altering the affinity of the ribosome for aminoacyl-tRNA, thus increasing their reactivity as acceptors for peptidyl transferase. This Sinorhizobium medicae (strain WSM419) (Ensifer medicae) protein is Elongation factor P.